The primary structure comprises 1862 residues: Transient receptor potential cation channel subfamily M member 7 (1862 aa).

Met1 is subject to N-acetylmethionine. Topologically, residues 1–850 (MSQKSWIEST…ITRKFYAFYH (850 aa)) are cytoplasmic. Ser101 carries the post-translational modification Phosphoserine. Residues 544–554 (NRRSGRNASSS) are compositionally biased toward low complexity. Positions 544 to 574 (NRRSGRNASSSTPQLRKSHETFGNRADKKEK) are disordered. Positions 560–573 (KSHETFGNRADKKE) are enriched in basic and acidic residues. The helical transmembrane segment at 851-876 (APIVKFWFNTLAYLGFLMLYTFVVLV) threads the bilayer. Residues 877-882 (QMEQLP) lie on the Extracellular side of the membrane. The chain crosses the membrane as a helical span at residues 883–904 (SVQEWIVIAYIFTYAIEKIREV). Over 905–923 (FMSEAGKISQKIKVWFSDY) the chain is Cytoplasmic. A helical membrane pass occupies residues 924-943 (FNVSDTIAIISFFVGFGLRF). The Extracellular segment spans residues 944-956 (GAKWNYINAYDNH). A helical membrane pass occupies residues 957-980 (VFVAGRLIYCLNIIFWYVRLLDFL). Residues 981–999 (AVNQQAGPYVMMIGKMVAN) are Cytoplasmic-facing. Residues 1000 to 1023 (MFYIVVIMALVLLSFGVPRKAILY) traverse the membrane as a helical segment. The Extracellular portion of the chain corresponds to 1024–1025 (PH). An intramembrane region (pore-forming) is located at residues 1026 to 1066 (EEPSWSLAKDIVFHPYWMIFGEVYAYEIDVCANDSALPTIC). Over 1067–1069 (GPG) the chain is Extracellular. The helical transmembrane segment at 1070 to 1098 (TWLTPFLQAVYLFVQYIIMVNLLIAFFNN) threads the bilayer. The Cytoplasmic segment spans residues 1099-1862 (VYLQVKAISN…EATNSVRLML (764 aa)). S-palmitoyl cysteine attachment occurs at residues Cys1143, Cys1144, and Cys1146. At Thr1163 the chain carries Phosphothreonine. Phosphoserine occurs at positions 1191, 1193, 1224, 1255, and 1258. A coiled-coil region spans residues 1198–1250 (RVTFERVEQMSIQIKEVGDRVNYIKRSLQSLDSQIGHLQDLSALTVDTLKTLT). Residue Thr1265 is modified to Phosphothreonine. Phosphoserine occurs at positions 1300, 1357, 1360, 1385, 1386, 1389, 1394, 1395, and 1403. The tract at residues 1380–1418 (NQKLGSSPNSSPHMSSPPTKFSVSTPSQPSCKSHLESTT) is disordered. Residues 1385-1397 (SSPNSSPHMSSPP) are compositionally biased toward low complexity. The span at 1398 to 1410 (TKFSVSTPSQPSC) shows a compositional bias: polar residues. Thr1404 carries the post-translational modification Phosphothreonine. Phosphoserine occurs at positions 1406 and 1445. At Thr1454 the chain carries Phosphothreonine. Phosphoserine is present on Ser1455. Residues Thr1466 and Thr1470 each carry the phosphothreonine modification. The disordered stretch occupies residues 1485–1511 (TPTSLHSEQESCSRRASTEDSPDVDSR). 5 positions are modified to phosphoserine: Ser1491, Ser1497, Ser1501, Ser1510, and Ser1530. Over residues 1491–1502 (SEQESCSRRAST) the composition is skewed to basic and acidic residues. Phosphothreonine is present on Thr1534. Ser1540 carries the post-translational modification Phosphoserine. Position 1548 is a phosphothreonine (Thr1548). 2 positions are modified to phosphoserine: Ser1564 and Ser1566. The residue at position 1580 (Thr1580) is a Phosphothreonine. The 231-residue stretch at 1591–1821 (ILNNSMSSWS…CCRKLKLPDL (231 aa)) folds into the Alpha-type protein kinase domain. Ser1595 and Ser1612 each carry phosphoserine. ADP is bound by residues Gly1618, Gly1619, Leu1620, Arg1621, and Lys1645. A Phosphoserine modification is found at Ser1657. Thr1682 carries the phosphothreonine modification. Positions 1717, 1718, and 1720 each coordinate ADP. His1750 contributes to the Zn(2+) binding site. The active-site Proton acceptor is the Asp1764. Residue Asp1774 participates in ADP binding. Residue Ser1776 is modified to Phosphoserine. The Zn(2+) site is built by His1807, Cys1809, and Cys1813. Thr1827 bears the Phosphothreonine mark. The tract at residues 1840 to 1862 (DLNLQAGNSTKESEATNSVRLML) is disordered. Phosphoserine is present on residues Ser1848 and Ser1857.

It in the C-terminal section; belongs to the protein kinase superfamily. Alpha-type protein kinase family. ALPK subfamily. The protein in the N-terminal section; belongs to the transient receptor (TC 1.A.4) family. LTrpC subfamily. TRPM7 sub-subfamily. In terms of assembly, homodimer. Homotetramer. Forms heteromers with TRPM6; heteromeric channels are functionally different from the homomeric channels. Interacts with PLCB1. Requires Zn(2+) as cofactor. Palmitoylated; palmitoylation at Cys-1143, Cys-1144 and Cys-1146 promotes TRPM7 trafficking from the Golgi to the surface membrane. In terms of processing, autophosphorylated; autophosphorylation regulates TRPM7 kinase activity towards its substrates. Post-translationally, the C-terminal kinase domain can be cleaved from the channel segment in a cell-type-specific fashion. TRPM7 is cleaved by caspase-8, dissociating the kinase from the ion-conducting pore. The cleaved kinase fragments (M7CKs) can translocate to the cell nucleus and binds chromatin-remodeling complex proteins in a Zn(2+)-dependent manner to ultimately phosphorylate specific Ser/Thr residues of histones.

It is found in the cell membrane. The protein resides in the cytoplasmic vesicle membrane. The protein localises to the nucleus. It catalyses the reaction L-seryl-[protein] + ATP = O-phospho-L-seryl-[protein] + ADP + H(+). It carries out the reaction L-threonyl-[protein] + ATP = O-phospho-L-threonyl-[protein] + ADP + H(+). The catalysed reaction is Mg(2+)(in) = Mg(2+)(out). The enzyme catalyses Ca(2+)(in) = Ca(2+)(out). It catalyses the reaction Zn(2+)(in) = Zn(2+)(out). With respect to regulation, channel displays constitutive activity. Channel activity is negatively regulated by cytosolic Mg(2+), Mg-ATP, low intracellular pH. Resting free cytosolic Mg(2+) and Mg-ATP concentrations seem to be sufficient to block native TRPM7 channel activity. TRPM7 channel activity is highly dependent on membrane levels of phosphatidylinositol 4,5 bisphosphate (PIP2). PIP2 hydrolysis negatively regulates TRPM7 channel activity. TRPM7 kinase activity does not affect channel activity. The kinase activity is controlled through the autophosphorylation of a serine/threonine-rich region located N-terminal to the catalytic domain. Bifunctional protein that combines an ion channel with an intrinsic kinase domain, enabling it to modulate cellular functions either by conducting ions through the pore or by phosphorylating downstream proteins via its kinase domain. The channel is highly permeable to divalent cations, specifically calcium (Ca2+), magnesium (Mg2+) and zinc (Zn2+) and mediates their influx. Controls a wide range of biological processes such as Ca2(+), Mg(2+) and Zn(2+) homeostasis, vesicular Zn(2+) release channel and intracellular Ca(2+) signaling, embryonic development, immune responses, cell motility, proliferation and differentiation. The C-terminal alpha-kinase domain autophosphorylates cytoplasmic residues of TRPM7. TRPM7 phosphorylates SMAD2, suggesting that TRPM7 kinase may play a role in activating SMAD signaling pathways. In vitro, TRPM7 kinase phosphorylates ANXA1 (annexin A1), myosin II isoforms and a variety of proteins with diverse cellular functions. Its function is as follows. The cleaved channel exhibits substantially higher current and potentiates Fas receptor signaling. In terms of biological role, the C-terminal kinase domain can be cleaved from the channel segment in a cell-type-specific fashion. In immune cells, the TRPM7 kinase domain is clipped from the channel domain by caspases in response to Fas-receptor stimulation. The cleaved kinase fragments can translocate to the nucleus, and bind chromatin-remodeling complex proteins in a Zn(2+)-dependent manner to ultimately phosphorylate specific Ser/Thr residues of histones known to be functionally important for cell differentiation and embryonic development. The sequence is that of Transient receptor potential cation channel subfamily M member 7 from Rattus norvegicus (Rat).